The primary structure comprises 282 residues: HTH-type transcriptional activator RhaR (282 aa).

The 99-residue stretch at 179–277 folds into the HTH araC/xylS-type domain; the sequence is DKLITRLAAS…GMTPSQWRHL (99 aa). 2 consecutive DNA-binding regions (H-T-H motif) follow at residues 196–217 and 244–267; these read DKFC…RQQT and ISDI…TRET.

As to quaternary structure, binds DNA as a dimer.

The protein resides in the cytoplasm. Its function is as follows. Activates expression of the rhaSR operon in response to L-rhamnose. This chain is HTH-type transcriptional activator RhaR, found in Escherichia coli (strain K12 / MC4100 / BW2952).